A 507-amino-acid chain; its full sequence is ATP synthase subunit alpha, chloroplastic (507 aa).

170-177 is an ATP binding site; the sequence is GDRQTGKT. T257 is subject to Phosphothreonine.

It belongs to the ATPase alpha/beta chains family. F-type ATPases have 2 components, CF(1) - the catalytic core - and CF(0) - the membrane proton channel. CF(1) has five subunits: alpha(3), beta(3), gamma(1), delta(1), epsilon(1). CF(0) has four main subunits: a, b, b' and c.

It localises to the plastid. It is found in the chloroplast thylakoid membrane. It catalyses the reaction ATP + H2O + 4 H(+)(in) = ADP + phosphate + 5 H(+)(out). Produces ATP from ADP in the presence of a proton gradient across the membrane. The alpha chain is a regulatory subunit. This Aethionema cordifolium (Lebanon stonecress) protein is ATP synthase subunit alpha, chloroplastic.